Reading from the N-terminus, the 544-residue chain is 4-coumarate--CoA ligase 2 (544 aa).

Residues S190, S191, G192, T193, T194, and K198 each coordinate ATP. Y240 serves as a coordination point for (E)-4-coumaroyl-AMP. K261 contributes to the CoA binding site. The interval 263-332 is SBD1; sequence DIVPFLELIQ…AKFPNAKLGQ (70 aa). Residues A310, Q332, G333, T337, and M345 each coordinate (E)-4-coumaroyl-AMP. Residues Q332, G333, and T337 each contribute to the ATP site. Residues 333 to 400 form an SBD2 region; that stretch reads GYGMTEAGPV…IRGDQIMKGY (68 aa). The ATP site is built by D421 and R436. The (E)-4-coumaroyl-AMP site is built by K438 and K442. 2 residues coordinate CoA: K444 and G445. K527 contributes to the ATP binding site.

This sequence belongs to the ATP-dependent AMP-binding enzyme family. The cofactor is Mg(2+).

The catalysed reaction is (E)-4-coumarate + ATP + CoA = (E)-4-coumaroyl-CoA + AMP + diphosphate. The enzyme catalyses (E)-4-coumarate + ATP + H(+) = (E)-4-coumaroyl-AMP + diphosphate. It catalyses the reaction (E)-4-coumaroyl-AMP + CoA = (E)-4-coumaroyl-CoA + AMP + H(+). It participates in phytoalexin biosynthesis; 3,4',5-trihydroxystilbene biosynthesis; 3,4',5-trihydroxystilbene from trans-4-coumarate: step 1/2. Its function is as follows. Carboxylate--CoA ligase that may use 4-coumarate as substrate. Follows a two-step reaction mechanism, wherein the carboxylate substrate first undergoes adenylation by ATP, followed by a thioesterification in the presence of CoA to yield the final CoA thioester. This is 4-coumarate--CoA ligase 2 (4CL2) from Petroselinum crispum (Parsley).